A 677-amino-acid chain; its full sequence is Opioid growth factor receptor (677 aa).

Residue methionine 1 is modified to N-acetylmethionine. Acidic residues predominate over residues 1–29 (MDDPDCDSTWEEDEEDAEDAEDEDCEDGE). The segment at 1–63 (MDDPDCDSTW…SSFQSRMTGS (63 aa)) is disordered. The segment covering 54-63 (SSFQSRMTGS) has biased composition (polar residues). A Bipartite nuclear localization signal motif is present at residues 267–283 (RRQLVHFAWEHFRPRCK). Residues 295 to 407 (FKPSSLPHPL…EPGPQSASEV (113 aa)) form a disordered region. Serine 299 and serine 315 each carry phosphoserine. 2 stretches are compositionally biased toward basic and acidic residues: residues 305–323 (EGSR…DHEA) and 331–345 (GPEH…DEGP). 6 positions are modified to phosphoserine: serine 349, serine 361, serine 378, serine 382, serine 403, and serine 420. The span at 361–395 (SQGDEAGGHGEDRPEPLSPKESKKRKLELSRREQP) shows a compositional bias: basic and acidic residues. A compositionally biased stretch (polar residues) spans 421–431 (QGSLRTGTQEV). The interval 421 to 677 (QGSLRTGTQE…VESSAKSGKP (257 aa)) is disordered. The segment covering 466–476 (GDSAAVASGGA) has biased composition (low complexity). Phosphoserine is present on serine 484. 7 repeat units span residues 517–536 (SPSE…EPAE), 537–556 (SPSE…EPAE), 557–576 (SPSE…EPAE), 577–596 (SPSE…EPAE), 597–616 (SPSE…EPAE), 617–636 (SPSE…EPAE), and 637–656 (SPSE…EPAK). The interval 517 to 656 (SPSETPGPSP…AGPTRDEPAK (140 aa)) is 7 X 20 AA approximate tandem repeats of [ST]-P-S-E-T-P-G-P-[SR]-P-A-G-P-[AT]-[GR]-D-E-P-A-[EK]. Low complexity predominate over residues 528-538 (GPAGDEPAESP). Serine 537 and serine 557 each carry phosphoserine. Phosphoserine is present on residues serine 617 and serine 637.

The protein belongs to the opioid growth factor receptor family. Highly expressed in the heart and liver, moderately in skeletal muscle and kidney and to a lesser extent in brain and pancreas. Expressed in fetal tissues including liver and kidney.

The protein localises to the cytoplasm. It is found in the nucleus. Its function is as follows. Receptor for opioid growth factor (OGF), also known as Met-enkephalin. Seems to be involved in growth regulation. The protein is Opioid growth factor receptor (OGFR) of Homo sapiens (Human).